A 355-amino-acid polypeptide reads, in one-letter code: Guanine nucleotide-binding protein G(z) subunit alpha (355 aa).

Positions 1–14 (MGCRQSSEEKEAAR) are enriched in basic and acidic residues. The segment at 1-26 (MGCRQSSEEKEAARRSRRIDRHLRSE) is disordered. A lipid anchor (N-myristoyl glycine) is attached at G2. C3 is lipidated: S-palmitoyl cysteine. The 324-residue stretch at 32–355 (REIKLLLLGT…QNNLKYIGLC (324 aa)) folds into the G-alpha domain. The tract at residues 35-48 (KLLLLGTSNSGKST) is G1 motif. GTP contacts are provided by residues 40–47 (GTSNSGKS), 176–182 (LRSRDMT), 201–205 (DVGGQ), 270–273 (NKKD), and A327. The Mg(2+) site is built by S47 and T182. Residues 174 to 182 (DILRSRDMT) form a G2 motif region. Positions 197–206 (FKMVDVGGQR) are G3 motif. Positions 266-273 (ILFLNKKD) are G4 motif. The segment at 325-330 (TCATDT) is G5 motif.

It belongs to the G-alpha family. G(i/o/t/z) subfamily. As to quaternary structure, G-proteins are composed of 3 units; alpha, beta and gamma. The alpha chain contains the guanine nucleotide binding site. Interacts with ADGRB2.

The protein localises to the membrane. Its function is as follows. Guanine nucleotide-binding proteins (G proteins) are involved as modulators or transducers in various transmembrane signaling systems. This chain is Guanine nucleotide-binding protein G(z) subunit alpha (Gnaz), found in Mus musculus (Mouse).